We begin with the raw amino-acid sequence, 438 residues long: 23S rRNA (uracil(1939)-C(5))-methyltransferase RlmD (438 aa).

One can recognise a TRAM domain in the interval 10-68 (KTKNVQTITADILDLDYQGLGVAKINGKTWFIENALPHEKVECRILEDKRQYGHAIVKK). Positions 81, 87, 90, and 168 each coordinate [4Fe-4S] cluster. Gln271, Phe300, Asn305, Glu321, Asp348, and Asp369 together coordinate S-adenosyl-L-methionine. The active-site Nucleophile is the Cys395.

Belongs to the class I-like SAM-binding methyltransferase superfamily. RNA M5U methyltransferase family. RlmD subfamily.

It catalyses the reaction uridine(1939) in 23S rRNA + S-adenosyl-L-methionine = 5-methyluridine(1939) in 23S rRNA + S-adenosyl-L-homocysteine + H(+). Catalyzes the formation of 5-methyl-uridine at position 1939 (m5U1939) in 23S rRNA. The protein is 23S rRNA (uracil(1939)-C(5))-methyltransferase RlmD of Haemophilus influenzae (strain ATCC 51907 / DSM 11121 / KW20 / Rd).